Consider the following 352-residue polypeptide: uncharacterized protein (352 aa).

This sequence to M.pneumoniae MPN_633 (in the N-terminal section), and M.pneumoniae MPN_634 (in the C-terminal section).

This is an uncharacterized protein from Mycoplasma pneumoniae (strain ATCC 29342 / M129 / Subtype 1) (Mycoplasmoides pneumoniae).